The chain runs to 504 residues: Maturase K (504 aa).

This sequence belongs to the intron maturase 2 family. MatK subfamily.

Its subcellular location is the plastid. It localises to the chloroplast. In terms of biological role, usually encoded in the trnK tRNA gene intron. Probably assists in splicing its own and other chloroplast group II introns. This is Maturase K from Arabidopsis halleri.